The chain runs to 125 residues: Large ribosomal subunit protein bL12 (125 aa).

In terms of assembly, homodimer. Part of the ribosomal stalk of the 50S ribosomal subunit. Forms a multimeric L10(L12)X complex, where L10 forms an elongated spine to which 2 to 4 L12 dimers bind in a sequential fashion. Binds GTP-bound translation factors. Post-translationally, two isoforms seem to exist. One is probably dimethylated on Lys-69 and monomethylated on Lys-86 while the other is probably acetylated or trimethylated on both Lys-86 and Lys-89.

Functionally, forms part of the ribosomal stalk which helps the ribosome interact with GTP-bound translation factors. Is thus essential for accurate translation. This chain is Large ribosomal subunit protein bL12, found in Rhodopseudomonas palustris (strain ATCC BAA-98 / CGA009).